Here is a 418-residue protein sequence, read N- to C-terminus: Actin-related protein 3 (418 aa).

An N-acetylalanine modification is found at alanine 2. An N6-acetyllysine mark is found at lysine 240, lysine 244, lysine 251, and lysine 254.

The protein belongs to the actin family. ARP3 subfamily. In terms of assembly, component of the Arp2/3 complex composed of ACTR2/ARP2, ACTR3/ARP3, ARPC1B/p41-ARC, ARPC2/p34-ARC, ARPC3/p21-ARC, ARPC4/p20-ARC and ARPC5/p16-ARC. Interacts with WHDC1. Interacts weakly with MEFV. Interacts with AVIL. As to quaternary structure, (Microbial infection) Interacts with bacterium B.thailandensis BimA.

Its subcellular location is the cytoplasm. The protein resides in the cytoskeleton. The protein localises to the cell projection. It localises to the nucleus. ATP-binding component of the Arp2/3 complex, a multiprotein complex that mediates actin polymerization upon stimulation by nucleation-promoting factor (NPF). The Arp2/3 complex mediates the formation of branched actin networks in the cytoplasm, providing the force for cell motility. Seems to contact the pointed end of the daughter actin filament. In podocytes, required for the formation of lamellipodia downstream of AVIL and PLCE1 regulation. In addition to its role in the cytoplasmic cytoskeleton, the Arp2/3 complex also promotes actin polymerization in the nucleus, thereby regulating gene transcription and repair of damaged DNA. The Arp2/3 complex promotes homologous recombination (HR) repair in response to DNA damage by promoting nuclear actin polymerization, leading to drive motility of double-strand breaks (DSBs). Plays a role in ciliogenesis. In Mus musculus (Mouse), this protein is Actin-related protein 3 (Actr3).